A 152-amino-acid chain; its full sequence is Putative rho GDP-dissociation inhibitor 2 (152 aa).

The protein belongs to the Rho GDI family.

It is found in the cytoplasm. Its function is as follows. Regulates the GDP/GTP exchange reaction of the Rho proteins by inhibiting the dissociation of GDP from them, and the subsequent binding of GTP to them. The protein is Putative rho GDP-dissociation inhibitor 2 (rdiB) of Dictyostelium discoideum (Social amoeba).